The primary structure comprises 364 residues: Phosphoserine aminotransferase (364 aa).

R40 contributes to the L-glutamate binding site. Residues 74–75 (GT), W100, T149, D170, and Q193 each bind pyridoxal 5'-phosphate. An N6-(pyridoxal phosphate)lysine modification is found at K194. 235–236 (NT) serves as a coordination point for pyridoxal 5'-phosphate.

The protein belongs to the class-V pyridoxal-phosphate-dependent aminotransferase family. SerC subfamily. Homodimer. Pyridoxal 5'-phosphate serves as cofactor. Expressed in ovary and head.

It catalyses the reaction O-phospho-L-serine + 2-oxoglutarate = 3-phosphooxypyruvate + L-glutamate. The catalysed reaction is 4-(phosphooxy)-L-threonine + 2-oxoglutarate = (R)-3-hydroxy-2-oxo-4-phosphooxybutanoate + L-glutamate. It functions in the pathway amino-acid biosynthesis; L-serine biosynthesis; L-serine from 3-phospho-D-glycerate: step 2/3. The protein operates within cofactor biosynthesis; pyridoxine 5'-phosphate biosynthesis; pyridoxine 5'-phosphate from D-erythrose 4-phosphate: step 3/5. Catalyzes the reversible conversion of 3-phosphohydroxypyruvate to phosphoserine and of 3-hydroxy-2-oxo-4-phosphonooxybutanoate to phosphohydroxythreonine. The polypeptide is Phosphoserine aminotransferase (Drosophila melanogaster (Fruit fly)).